The chain runs to 104 residues: UPF0213 protein VIBHAR_05350 (104 aa).

The GIY-YIG domain occupies 7 to 82 (QRWSVYLIRN…KQLTKTKKEL (76 aa)).

The protein belongs to the UPF0213 family.

The chain is UPF0213 protein VIBHAR_05350 from Vibrio campbellii (strain ATCC BAA-1116).